A 372-amino-acid chain; its full sequence is Testis-specific serine/threonine-protein kinase 5 (372 aa).

One can recognise a Protein kinase domain in the interval Leu-27 to Met-302. ATP is bound by residues Ile-33 to Val-41 and Lys-72. Catalysis depends on Asp-173, which acts as the Proton acceptor. Residues Gly-314–Gln-372 form a disordered region. Positions Lys-343–Ser-358 are enriched in low complexity.

It belongs to the protein kinase superfamily. CAMK Ser/Thr protein kinase family. Mg(2+) is required as a cofactor. Post-translationally, autophosphorylated.

It carries out the reaction L-seryl-[protein] + ATP = O-phospho-L-seryl-[protein] + ADP + H(+). The catalysed reaction is L-threonyl-[protein] + ATP = O-phospho-L-threonyl-[protein] + ADP + H(+). With respect to regulation, activated by phosphorylation on Thr-207, potentially by autophosphorylation. In terms of biological role, may be involved in a signaling pathway during male germ cell development or mature sperm function. The protein is Testis-specific serine/threonine-protein kinase 5 of Mus musculus (Mouse).